Consider the following 121-residue polypeptide: NLVQFKTLIMKIAGRSVVYKYFYGCYCGWGGIGQPRDATDRCCFVHDCCYGKVTNCNPKTATYSYTEENGALVCGGDDPCKKQVCECDRVAAMCFRDNKDTYDNKYWFLPPKNCQEDSEPC.

7 disulfide bridges follow: cysteine 25–cysteine 114, cysteine 27–cysteine 43, cysteine 42–cysteine 94, cysteine 48–cysteine 121, cysteine 49–cysteine 87, cysteine 56–cysteine 80, and cysteine 74–cysteine 85. Residues tyrosine 26, glycine 28, and glycine 30 each contribute to the Ca(2+) site. The active site involves histidine 46. Aspartate 47 is a binding site for Ca(2+). Aspartate 88 is an active-site residue.

Ca(2+) serves as cofactor. In terms of tissue distribution, expressed by the venom gland.

It is found in the secreted. The catalysed reaction is a 1,2-diacyl-sn-glycero-3-phosphocholine + H2O = a 1-acyl-sn-glycero-3-phosphocholine + a fatty acid + H(+). Its function is as follows. Snake venom phospholipase A2 (PLA2) which exhibits indirect hemolysis, induces mild edema inflammation in the foot pads of mice and slightly delays anticoagulant activities. In mice, not lethal, even at the highest dose, and exhibits low to moderate myotoxicity on muscular fibers. PLA2 catalyzes the calcium-dependent hydrolysis of the 2-acyl groups in 3-sn-phosphoglycerides. This Bothrops alternatus (Urutu) protein is Acidic phospholipase A2 SpII RP4.